A 290-amino-acid chain; its full sequence is Protein 3 (290 aa).

The polypeptide is Protein 3 (Lettuce big-vein associated virus (isolate Japan/Kagawa) (LBVaV)).